The sequence spans 353 residues: Photosystem II D2 protein (353 aa).

At Thr-2 the chain carries N-acetylthreonine. Thr-2 is modified (phosphothreonine). A helical transmembrane segment spans residues 41-61; that stretch reads CAYFAVGGWFTGTTFVTSWYT. Residue His-118 coordinates chlorophyll a. A helical membrane pass occupies residues 125–141; that stretch reads GFMLRQFELARSVQLRP. The pheophytin a site is built by Gln-130 and Asn-143. The chain crosses the membrane as a helical span at residues 153–166; sequence VFVSVFLIYPLGQS. Chlorophyll a is bound at residue His-198. The chain crosses the membrane as a helical span at residues 208 to 228; the sequence is AALLCAIHGATVENTLFEDGD. Residues His-215 and Phe-262 each coordinate a plastoquinone. His-215 is a Fe cation binding site. His-269 serves as a coordination point for Fe cation. A helical membrane pass occupies residues 279–295; sequence GLWMSALGVVGLALNLR.

The protein belongs to the reaction center PufL/M/PsbA/D family. In terms of assembly, PSII is composed of 1 copy each of membrane proteins PsbA, PsbB, PsbC, PsbD, PsbE, PsbF, PsbH, PsbI, PsbJ, PsbK, PsbL, PsbM, PsbT, PsbX, PsbY, PsbZ, Psb30/Ycf12, at least 3 peripheral proteins of the oxygen-evolving complex and a large number of cofactors. It forms dimeric complexes. The D1/D2 heterodimer binds P680, chlorophylls that are the primary electron donor of PSII, and subsequent electron acceptors. It shares a non-heme iron and each subunit binds pheophytin, quinone, additional chlorophylls, carotenoids and lipids. There is also a Cl(-1) ion associated with D1 and D2, which is required for oxygen evolution. The PSII complex binds additional chlorophylls, carotenoids and specific lipids. serves as cofactor.

It localises to the plastid. It is found in the chloroplast thylakoid membrane. The catalysed reaction is 2 a plastoquinone + 4 hnu + 2 H2O = 2 a plastoquinol + O2. In terms of biological role, photosystem II (PSII) is a light-driven water:plastoquinone oxidoreductase that uses light energy to abstract electrons from H(2)O, generating O(2) and a proton gradient subsequently used for ATP formation. It consists of a core antenna complex that captures photons, and an electron transfer chain that converts photonic excitation into a charge separation. The D1/D2 (PsbA/PsbD) reaction center heterodimer binds P680, the primary electron donor of PSII as well as several subsequent electron acceptors. D2 is needed for assembly of a stable PSII complex. This chain is Photosystem II D2 protein, found in Ipomoea purpurea (Common morning glory).